The chain runs to 390 residues: MKLHTLVMFTLVIGSPLLPQHRCYRNSQTFQLVHTLNKFVGRRRRALKPTLHANPPSEHLQNLKYVREVTNASIQICNDALKECKGDVEKAIELVRRSAKNSSFVSTSVKVKTEGLVGSQVGGDQVVMLEVLTDSDFVARNEKFVRFVRTLLGAALAGGAAHGGAVTGEGSGATALLSLPYDEQSGGSHSGGPHIAHSTTTVGEQMNYLRNIFREDVRIGRFARYERKNANQFLHCYIHNRVEENIGTSGVLLVLTIDELSEKLKSQGECIAEVANDMALHILSAKPVSVSVSDLPEQVVKREVAIIRESLRGVKKPEGILDSMVNGKMRKFYSSVVLLEQEYMLDDTKRKVSQVIRDFCKKHNLNISVRHFDTFIVGEKNILREGPMGG.

The protein belongs to the EF-Ts family.

It localises to the mitochondrion. Functionally, associates with the EF-Tu.GDP complex and induces the exchange of GDP to GTP. It remains bound to the aminoacyl-tRNA.EF-Tu.GTP complex up to the GTP hydrolysis stage on the ribosome. The sequence is that of Elongation factor Ts, mitochondrial from Plasmodium vivax (strain Salvador I).